A 644-amino-acid chain; its full sequence is Adhesion G-protein coupled receptor F2 (644 aa).

Positions 1–18 are cleaved as a signal peptide; that stretch reads MIPAHWLYCLMLLLPIES. The Extracellular portion of the chain corresponds to 19-386; that stretch reads CRILCQASSK…ESPVLTYITY (368 aa). N-linked (GlcNAc...) asparagine glycosylation is found at asparagine 155, asparagine 219, asparagine 293, and asparagine 311. The GAIN-B domain occupies 233–377; the sequence is SRGSLGKNFT…SILMSPNTLE (145 aa). Cystine bridges form between cysteine 329-cysteine 356 and cysteine 344-cysteine 358. Positions 329-377 are GPS; that stretch reads CVGWHSLESRWDWRACKTIQENSRQAVCRCRPNKLYTSFSILMSPNTLE. Residues 387 to 407 traverse the membrane as a helical segment; sequence IGLGISICSLIICLAIEVLVW. At 408–422 the chain is on the cytoplasmic side; the sequence is SQVTKTEISYLRHLC. The helical transmembrane segment at 423–443 threads the bilayer; that stretch reads IANIAATLLMADAWFIVASFL. The Extracellular segment spans residues 444 to 465; sequence SGPVLHHNGCVAATFFVHFFYL. A helical membrane pass occupies residues 466–486; the sequence is SVFFWMLAKALLILYGILIVF. The Cytoplasmic segment spans residues 487 to 493; the sequence is HTLPKSC. A helical membrane pass occupies residues 494 to 514; the sequence is LVASLFSVGYGCPLVIAIITL. Residues 515–541 lie on the Extracellular side of the membrane; the sequence is AVTEPGKGYLRPEACWLNWDMTKALLA. A helical transmembrane segment spans residues 542–562; sequence FVVPALAIVVVNLITVTMVII. Residues 563 to 585 are Cytoplasmic-facing; sequence KTQRAAIGSSMFQEVRAIVRICK. The chain crosses the membrane as a helical span at residues 586–606; the sequence is NIAILTPLLGLTWGFGIATVI. Residues 607–610 lie on the Extracellular side of the membrane; sequence NGHS. A helical membrane pass occupies residues 611–631; it reads LAFHIIFSLLNALQVSPDAAV.

The protein belongs to the G-protein coupled receptor 2 family. Adhesion G-protein coupled receptor (ADGR) subfamily. Mainly expressed in skin and heart, and very weakly in lung and spleen. Detected in all epidermal layers of skin.

It is found in the membrane. Functionally, orphan receptor. The chain is Adhesion G-protein coupled receptor F2 (Adgrf2) from Mus musculus (Mouse).